The chain runs to 508 residues: Cobyric acid synthase (508 aa).

In terms of domain architecture, GATase cobBQ-type spans 266–464 (SLRIAVVAYP…AHGLFESTEV (199 aa)). Cys-347 functions as the Nucleophile in the catalytic mechanism. His-456 is a catalytic residue.

It belongs to the CobB/CobQ family. CobQ subfamily.

It participates in cofactor biosynthesis; adenosylcobalamin biosynthesis. Catalyzes amidations at positions B, D, E, and G on adenosylcobyrinic A,C-diamide. NH(2) groups are provided by glutamine, and one molecule of ATP is hydrogenolyzed for each amidation. This Methylibium petroleiphilum (strain ATCC BAA-1232 / LMG 22953 / PM1) protein is Cobyric acid synthase.